The chain runs to 110 residues: MQAALEVTARYCGRELEQYGQCVAAKPESWQRDCHYLKMSIAQCTSSHPIIRQIRQACAQPFEAFEECLRQNEAAVGNCAEHMRRFLQCAEQVQPPRSPATVEAQPLPAS.

Position 1 is an N-acetylmethionine (M1). 2 consecutive CHCH domains span residues 9–52 (ARYC…PIIR) and 55–97 (RQAC…QPPR). 4 short sequence motifs (cx9C motif) span residues 12–22 (CGRELEQYGQC), 34–44 (CHYLKMSIAQC), 58–68 (CAQPFEAFEEC), and 79–89 (CAEHMRRFLQC). 4 disulfide bridges follow: C12/C44, C22/C34, C58/C89, and C68/C79.

Monomer.

It localises to the mitochondrion intermembrane space. In Homo sapiens (Human), this protein is Coiled-coil-helix-coiled-coil-helix domain-containing protein 5 (CHCHD5).